The sequence spans 545 residues: Hsk1-interacting molecule 1 (545 aa).

The segment at 492 to 541 (VDAKPGYCENCREKFDNFESHIRSSRHRRFAENNDNFKDLDELFALVQRP) adopts a DBF4-type zinc-finger fold. Residues C499, C502, H512, and H518 each coordinate Zn(2+).

Associates with hsk1. Interacts with mcm10. In terms of processing, hyperphosphorylated at the G1/S and S-phases of the cell cycle.

It localises to the nucleus. In terms of biological role, activates hsk1 kinase and is essential for G1/S transition. Has a role in S-phase checkpoint control induced by replication fork blocks after nucleotide deprivation and DNA damage. The protein is Hsk1-interacting molecule 1 (him1) of Schizosaccharomyces pombe (strain 972 / ATCC 24843) (Fission yeast).